The sequence spans 375 residues: Chaperone protein DnaJ (375 aa).

The region spanning 5 to 69 (DYYEVLGVGK…QKRAHYDQFG (65 aa)) is the J domain. The segment at 132–214 (GKETTIEIPR…CGGTGKVKKR (83 aa)) adopts a CR-type zinc-finger fold. C145, C148, C162, C165, C188, C191, C202, and C205 together coordinate Zn(2+). CXXCXGXG motif repeat units follow at residues 145 to 152 (CETCSGSG), 162 to 169 (CSHCGGSG), 188 to 195 (CHYCNGTG), and 202 to 209 (CSTCGGTG).

The protein belongs to the DnaJ family. Homodimer. Requires Zn(2+) as cofactor.

The protein resides in the cytoplasm. Functionally, participates actively in the response to hyperosmotic and heat shock by preventing the aggregation of stress-denatured proteins and by disaggregating proteins, also in an autonomous, DnaK-independent fashion. Unfolded proteins bind initially to DnaJ; upon interaction with the DnaJ-bound protein, DnaK hydrolyzes its bound ATP, resulting in the formation of a stable complex. GrpE releases ADP from DnaK; ATP binding to DnaK triggers the release of the substrate protein, thus completing the reaction cycle. Several rounds of ATP-dependent interactions between DnaJ, DnaK and GrpE are required for fully efficient folding. Also involved, together with DnaK and GrpE, in the DNA replication of plasmids through activation of initiation proteins. This is Chaperone protein DnaJ from Bacillus licheniformis (strain ATCC 14580 / DSM 13 / JCM 2505 / CCUG 7422 / NBRC 12200 / NCIMB 9375 / NCTC 10341 / NRRL NRS-1264 / Gibson 46).